Reading from the N-terminus, the 331-residue chain is Ribosomal RNA small subunit methyltransferase H (331 aa).

Residues 48 to 50 (GGH), D67, D115, and Q122 contribute to the S-adenosyl-L-methionine site. A disordered region spans residues 297–331 (RGTEKPTEEEISENRRASSAKVRAVEKIRTSRTTA). Over residues 298–312 (GTEKPTEEEISENRR) the composition is skewed to basic and acidic residues.

It belongs to the methyltransferase superfamily. RsmH family.

It is found in the cytoplasm. It carries out the reaction cytidine(1402) in 16S rRNA + S-adenosyl-L-methionine = N(4)-methylcytidine(1402) in 16S rRNA + S-adenosyl-L-homocysteine + H(+). Functionally, specifically methylates the N4 position of cytidine in position 1402 (C1402) of 16S rRNA. This is Ribosomal RNA small subunit methyltransferase H from Micrococcus luteus (strain ATCC 4698 / DSM 20030 / JCM 1464 / CCM 169 / CCUG 5858 / IAM 1056 / NBRC 3333 / NCIMB 9278 / NCTC 2665 / VKM Ac-2230) (Micrococcus lysodeikticus).